We begin with the raw amino-acid sequence, 592 residues long: Putative esterase (592 aa).

A helical membrane pass occupies residues 12 to 32 (LTLIAYLSVLMGVSVYFYVLI). Residues Asn68, Asn83, Asn95, Asn447, and Asn510 are each glycosylated (N-linked (GlcNAc...) asparagine; by host). His513 functions as the Charge relay system in the catalytic mechanism. An N-linked (GlcNAc...) asparagine; by host glycan is attached at Asn528.

The protein belongs to the type-B carboxylesterase/lipase family.

The protein resides in the membrane. The catalysed reaction is a carboxylic ester + H2O = an alcohol + a carboxylate + H(+). In Spodoptera frugiperda (Fall armyworm), this protein is Putative esterase.